The chain runs to 228 residues: Triosephosphate isomerase (228 aa).

Residue 12–14 (NFK) coordinates substrate. The active-site Electrophile is the His-96. The active-site Proton acceptor is the Glu-144. Substrate is bound by residues Ile-149, Gly-184, and 205-206 (AS).

This sequence belongs to the triosephosphate isomerase family. As to quaternary structure, homotetramer; dimer of dimers.

The protein localises to the cytoplasm. It catalyses the reaction D-glyceraldehyde 3-phosphate = dihydroxyacetone phosphate. It participates in carbohydrate biosynthesis; gluconeogenesis. It functions in the pathway carbohydrate degradation; glycolysis; D-glyceraldehyde 3-phosphate from glycerone phosphate: step 1/1. Involved in the gluconeogenesis. Catalyzes stereospecifically the conversion of dihydroxyacetone phosphate (DHAP) to D-glyceraldehyde-3-phosphate (G3P). This is Triosephosphate isomerase from Pyrococcus furiosus (strain ATCC 43587 / DSM 3638 / JCM 8422 / Vc1).